Reading from the N-terminus, the 423-residue chain is Histidine--tRNA ligase (423 aa).

Belongs to the class-II aminoacyl-tRNA synthetase family. Homodimer.

The protein localises to the cytoplasm. It catalyses the reaction tRNA(His) + L-histidine + ATP = L-histidyl-tRNA(His) + AMP + diphosphate + H(+). In Anoxybacillus flavithermus (strain DSM 21510 / WK1), this protein is Histidine--tRNA ligase.